Consider the following 180-residue polypeptide: Large ribosomal subunit protein uL6 (180 aa).

This sequence belongs to the universal ribosomal protein uL6 family. Part of the 50S ribosomal subunit.

In terms of biological role, this protein binds to the 23S rRNA, and is important in its secondary structure. It is located near the subunit interface in the base of the L7/L12 stalk, and near the tRNA binding site of the peptidyltransferase center. This Borrelia hermsii (strain HS1 / DAH) protein is Large ribosomal subunit protein uL6.